The sequence spans 343 residues: CRISPR-associated endonuclease Cas1 1 (343 aa).

3 residues coordinate Mn(2+): glutamate 166, histidine 234, and glutamate 249.

The protein belongs to the CRISPR-associated endonuclease Cas1 family. As to quaternary structure, homodimer, forms a heterotetramer with a Cas2 homodimer. The cofactor is Mg(2+). Mn(2+) is required as a cofactor.

Functionally, CRISPR (clustered regularly interspaced short palindromic repeat), is an adaptive immune system that provides protection against mobile genetic elements (viruses, transposable elements and conjugative plasmids). CRISPR clusters contain spacers, sequences complementary to antecedent mobile elements, and target invading nucleic acids. CRISPR clusters are transcribed and processed into CRISPR RNA (crRNA). Acts as a dsDNA endonuclease. Involved in the integration of spacer DNA into the CRISPR cassette. This chain is CRISPR-associated endonuclease Cas1 1, found in Moorella thermoacetica (strain ATCC 39073 / JCM 9320).